A 217-amino-acid polypeptide reads, in one-letter code: ATP-dependent Clp protease proteolytic subunit (217 aa).

Ser121 functions as the Nucleophile in the catalytic mechanism. The active site involves His146.

This sequence belongs to the peptidase S14 family. As to quaternary structure, fourteen ClpP subunits assemble into 2 heptameric rings which stack back to back to give a disk-like structure with a central cavity, resembling the structure of eukaryotic proteasomes.

The protein resides in the cytoplasm. It carries out the reaction Hydrolysis of proteins to small peptides in the presence of ATP and magnesium. alpha-casein is the usual test substrate. In the absence of ATP, only oligopeptides shorter than five residues are hydrolyzed (such as succinyl-Leu-Tyr-|-NHMec, and Leu-Tyr-Leu-|-Tyr-Trp, in which cleavage of the -Tyr-|-Leu- and -Tyr-|-Trp bonds also occurs).. In terms of biological role, cleaves peptides in various proteins in a process that requires ATP hydrolysis. Has a chymotrypsin-like activity. Plays a major role in the degradation of misfolded proteins. This is ATP-dependent Clp protease proteolytic subunit from Burkholderia vietnamiensis (strain G4 / LMG 22486) (Burkholderia cepacia (strain R1808)).